The chain runs to 597 residues: Elongation factor 4 (597 aa).

In terms of domain architecture, tr-type G spans 2–184 (DHIRNFSIIA…ALIAKVPPPK (183 aa)). GTP is bound by residues 14 to 19 (DHGKST) and 131 to 134 (NKID).

This sequence belongs to the TRAFAC class translation factor GTPase superfamily. Classic translation factor GTPase family. LepA subfamily.

It localises to the cell inner membrane. It catalyses the reaction GTP + H2O = GDP + phosphate + H(+). Functionally, required for accurate and efficient protein synthesis under certain stress conditions. May act as a fidelity factor of the translation reaction, by catalyzing a one-codon backward translocation of tRNAs on improperly translocated ribosomes. Back-translocation proceeds from a post-translocation (POST) complex to a pre-translocation (PRE) complex, thus giving elongation factor G a second chance to translocate the tRNAs correctly. Binds to ribosomes in a GTP-dependent manner. The protein is Elongation factor 4 of Paraburkholderia phymatum (strain DSM 17167 / CIP 108236 / LMG 21445 / STM815) (Burkholderia phymatum).